We begin with the raw amino-acid sequence, 305 residues long: MLAVRKARRKLRMGTICSPNPSGTKTSSEVCNADWMASLPPHLHNLPLSNLAIPGSHDSFSYWVDEKSPVGPDQTQAIKRLARISLVKKLMKKWSVTQNLTFREQLEAGIRYFDLRVSSKPGDADQEIYFIHGLFGIKVWDGLMEIDSFLTQHPQEIIFLDFNHFYAMDETHHKCLVLRIQEAFGNKLCPACSVESLTLRTLWEKNCQVLIFYHCPFYKQYPFLWPGKKIPAPWANTTSVRKLILFLETTLSERASRGSFHVSQAILTPRVKTIARGLVGGLKNTLVHSNRWNSHGPSLLSQERS.

A PI-PLC X-box domain is found at H42–C215. Catalysis depends on residues H57 and H132.

In terms of tissue distribution, widely expressed.

It is found in the nucleus. The catalysed reaction is a 1,2-diacyl-sn-glycero-3-phospho-(1D-myo-inositol) + H2O = 1D-myo-inositol 1-phosphate + a 1,2-diacyl-sn-glycerol + H(+). Catalyzes the hydrolysis of inositol from phosphatidylinositol (1,2-diacyl-sn-glycero-3-phospho-(1D-myo-inositol), PI). Could also hydrolyze various multi-phosphorylated derivatives of PI, such as phosphatidylinositol-4,5 bisphosphate (PIP2), releasing inositol-1,4,5-trisphosphate (IP3) and the protein kinase C activator diacylglycerol (DAG), therefore mediating cell signaling. This is PI-PLC X domain-containing protein 2 (PLCXD2) from Homo sapiens (Human).